Reading from the N-terminus, the 584-residue chain is Glutathione hydrolase proenzyme (584 aa).

The N-terminal stretch at 1-25 is a signal peptide; the sequence is MAPAAMNLLCTVLYLLSSFAQVSDA. An N-linked (GlcNAc...) asparagine glycan is attached at Asn-111. L-glutamate is bound at residue Arg-120. Asn-135, Asn-262, Asn-272, Asn-350, and Asn-370 each carry an N-linked (GlcNAc...) asparagine glycan. Catalysis depends on Thr-395, which acts as the Nucleophile. L-glutamate contacts are provided by residues Thr-413, Glu-434, and 465-466; that span reads SS. Asn-547 is a glycosylation site (N-linked (GlcNAc...) asparagine).

This sequence belongs to the gamma-glutamyltransferase family. Heterodimer composed of the light and heavy chains. The active site is located in the light chain. In terms of processing, cleaved by autocatalysis into a large and a small subunit and the autocatalytic cleavage is essential to the functional activation of the enzyme.

Its subcellular location is the secreted. The enzyme catalyses an N-terminal (5-L-glutamyl)-[peptide] + an alpha-amino acid = 5-L-glutamyl amino acid + an N-terminal L-alpha-aminoacyl-[peptide]. It catalyses the reaction glutathione + H2O = L-cysteinylglycine + L-glutamate. The catalysed reaction is an S-substituted glutathione + H2O = an S-substituted L-cysteinylglycine + L-glutamate. It carries out the reaction leukotriene C4 + H2O = leukotriene D4 + L-glutamate. The protein operates within sulfur metabolism; glutathione metabolism. Cleaves the gamma-glutamyl bond of extracellular glutathione (gamma-Glu-Cys-Gly), glutathione conjugates, and other gamma-glutamyl compounds. The metabolism of glutathione releases free glutamate and the dipeptide cysteinyl-glycine, which is hydrolyzed to cysteine and glycine by dipeptidases. In the presence of high concentrations of dipeptides and some amino acids, can also catalyze a transpeptidation reaction, transferring the gamma-glutamyl moiety to an acceptor amino acid to form a new gamma-glutamyl compound. Initiates extracellular glutathione (GSH) breakdown, provides cells with a local cysteine supply and contributes to maintain intracellular GSH level. It is part of the cell antioxidant defense mechanism. The chain is Glutathione hydrolase proenzyme from Arthroderma benhamiae (strain ATCC MYA-4681 / CBS 112371) (Trichophyton mentagrophytes).